A 304-amino-acid chain; its full sequence is Glutaminase (304 aa).

Residues Ser63, Asn114, Glu158, Asn165, Tyr189, Tyr240, and Val258 each coordinate substrate.

Belongs to the glutaminase family. As to quaternary structure, homotetramer.

It carries out the reaction L-glutamine + H2O = L-glutamate + NH4(+). The polypeptide is Glutaminase (Shewanella baltica (strain OS195)).